The following is an 88-amino-acid chain: MEYQYPMNEDWTTEEAVDVIAFFQQVELAYEKGADREELLKAYRRFKEIVPGKAEEKKLCGEFEEQSTYSPYRTVKQARESDHAKIKM.

The protein belongs to the UPF0223 family.

The sequence is that of UPF0223 protein YktA (yktA) from Bacillus subtilis (strain 168).